The chain runs to 166 residues: Small ribosomal subunit protein bS6 (166 aa).

The tract at residues 97-166 (EEGPSAMMRK…EEAETATDGE (70 aa)) is disordered. Residues 105-159 (RKADRDRERDDRGGGFRGEREGGFRGDREGGFRGGDRDGGGFRGDRGPRRPREEA) show a composition bias toward basic and acidic residues.

It belongs to the bacterial ribosomal protein bS6 family.

Binds together with bS18 to 16S ribosomal RNA. The protein is Small ribosomal subunit protein bS6 of Bradyrhizobium diazoefficiens (strain JCM 10833 / BCRC 13528 / IAM 13628 / NBRC 14792 / USDA 110).